Consider the following 1196-residue polypeptide: DNA-directed RNA polymerase subunit beta (1196 aa).

It belongs to the RNA polymerase beta chain family. In terms of assembly, the RNAP catalytic core consists of 2 alpha, 1 beta, 1 beta' and 1 omega subunit. When a sigma factor is associated with the core the holoenzyme is formed, which can initiate transcription.

The enzyme catalyses RNA(n) + a ribonucleoside 5'-triphosphate = RNA(n+1) + diphosphate. In terms of biological role, DNA-dependent RNA polymerase catalyzes the transcription of DNA into RNA using the four ribonucleoside triphosphates as substrates. The protein is DNA-directed RNA polymerase subunit beta of Lactococcus lactis subsp. lactis (strain IL1403) (Streptococcus lactis).